We begin with the raw amino-acid sequence, 703 residues long: Neoverrucotoxin subunit alpha (703 aa).

S2 is subject to N-acetylserine. A B30.2/SPRY domain is found at 508-703; sequence PRMPFVQGYK…RFDHGTVRLL (196 aa).

This sequence belongs to the SNTX/VTX toxin family. Heterodimer of alpha and beta subunits. In terms of processing, not glycosylated. Post-translationally, four intrachain disulfide linkages are present in the heterodimer. No interchain disulfide bound links the two subunits. Expressed by the venom gland.

Its subcellular location is the secreted. Has hemolytic and lethal activities. Its hemolytic activity is inhibited by anionic lipids, especially potently by cardiolipin. This Synanceia verrucosa (Reef stonefish) protein is Neoverrucotoxin subunit alpha.